The sequence spans 255 residues: Leucyl/phenylalanyl-tRNA--protein transferase (255 aa).

The protein belongs to the L/F-transferase family.

The protein resides in the cytoplasm. The enzyme catalyses N-terminal L-lysyl-[protein] + L-leucyl-tRNA(Leu) = N-terminal L-leucyl-L-lysyl-[protein] + tRNA(Leu) + H(+). It catalyses the reaction N-terminal L-arginyl-[protein] + L-leucyl-tRNA(Leu) = N-terminal L-leucyl-L-arginyl-[protein] + tRNA(Leu) + H(+). The catalysed reaction is L-phenylalanyl-tRNA(Phe) + an N-terminal L-alpha-aminoacyl-[protein] = an N-terminal L-phenylalanyl-L-alpha-aminoacyl-[protein] + tRNA(Phe). In terms of biological role, functions in the N-end rule pathway of protein degradation where it conjugates Leu, Phe and, less efficiently, Met from aminoacyl-tRNAs to the N-termini of proteins containing an N-terminal arginine or lysine. In Polaromonas sp. (strain JS666 / ATCC BAA-500), this protein is Leucyl/phenylalanyl-tRNA--protein transferase.